The primary structure comprises 328 residues: Glucan endo-1,3-beta-glucosidase, basic isoform 3 (328 aa).

The active-site Proton donor is the Glu-85. Glu-230 serves as the catalytic Nucleophile. Residues 306-328 (VSERVWDISAETNSTTSSLISEM) constitute a propeptide, removed in mature form. The N-linked (GlcNAc...) asparagine glycan is linked to Asn-318.

This sequence belongs to the glycosyl hydrolase 17 family.

Its subcellular location is the vacuole. The catalysed reaction is Hydrolysis of (1-&gt;3)-beta-D-glucosidic linkages in (1-&gt;3)-beta-D-glucans.. Is thought to be an important plant defense-related product against fungal pathogens. In Solanum tuberosum (Potato), this protein is Glucan endo-1,3-beta-glucosidase, basic isoform 3 (GLUB3).